We begin with the raw amino-acid sequence, 436 residues long: Ribulose bisphosphate carboxylase large chain (436 aa).

Positions 104 and 154 each coordinate substrate. Catalysis depends on Lys-156, which acts as the Proton acceptor. Lys-158 lines the substrate pocket. 3 residues coordinate Mg(2+): Lys-182, Asp-184, and Glu-185. Lys-182 is modified (N6-carboxylysine). The active-site Proton acceptor is the His-275. Substrate contacts are provided by Arg-276, His-308, and Ser-360.

This sequence belongs to the RuBisCO large chain family. Type I subfamily. As to quaternary structure, heterohexadecamer of 8 large chains and 8 small chains; disulfide-linked. The disulfide link is formed within the large subunit homodimers. Mg(2+) is required as a cofactor. The disulfide bond which can form in the large chain dimeric partners within the hexadecamer appears to be associated with oxidative stress and protein turnover.

It localises to the plastid. The protein localises to the chloroplast. It carries out the reaction 2 (2R)-3-phosphoglycerate + 2 H(+) = D-ribulose 1,5-bisphosphate + CO2 + H2O. The catalysed reaction is D-ribulose 1,5-bisphosphate + O2 = 2-phosphoglycolate + (2R)-3-phosphoglycerate + 2 H(+). RuBisCO catalyzes two reactions: the carboxylation of D-ribulose 1,5-bisphosphate, the primary event in carbon dioxide fixation, as well as the oxidative fragmentation of the pentose substrate in the photorespiration process. Both reactions occur simultaneously and in competition at the same active site. The chain is Ribulose bisphosphate carboxylase large chain from Euglena geniculata.